We begin with the raw amino-acid sequence, 393 residues long: Nucleosome assembly protein 1-like 1 (393 aa).

Residues 1-10 (MANIDNKEQT) are compositionally biased toward basic and acidic residues. Disordered stretches follow at residues 1–36 (MANI…NSKA) and 132–165 (ECEW…KEDP). Acidic residues-rich tracts occupy residues 11–30 (ELDQ…EAGE) and 132–144 (ECEW…EDIS). The NAP1L motif motif lies at 126–151 (YEPTEEECEWKVDEEEDISGDLKDKA). The span at 145–165 (GDLKDKAKLEEEKKDEEKEDP) shows a compositional bias: basic and acidic residues. Positions 274 to 280 (IKKKQKH) match the Nuclear localization signal motif. Residues 347–378 (AIEDDDDDYDEEGEEADDEEGEEEADEDNDPD) are compositionally biased toward acidic residues. Positions 347–393 (AIEDDDDDYDEEGEEADDEEGEEEADEDNDPDYEPKKDQNPAECKQQ) are disordered. Over residues 379–393 (YEPKKDQNPAECKQQ) the composition is skewed to basic and acidic residues.

Belongs to the nucleosome assembly protein (NAP) family. In terms of assembly, forms homomultimers. Interacts with histone B4. Interacts with the B-type cyclins ccnb1 and ccnb2. Phosphorylated by cyclin B-cdc2 kinase complexes.

Its subcellular location is the cytoplasm. It is found in the nucleus. In terms of biological role, acts as a chaperone for the linker histone to facilitate deposition of histone B4 onto linker DNA. Required for both remodeling of sperm chromatin into nucleosomes, and linker histone binding to nucleosome core dimers. Plays a role in tissue-specific gene regulation. Required for primitive hemopoiesis, acting upstream of tal1/scl. The sequence is that of Nucleosome assembly protein 1-like 1 from Xenopus tropicalis (Western clawed frog).